A 402-amino-acid chain; its full sequence is Acyl-[acyl-carrier-protein] desaturase 3, chloroplastic (402 aa).

Residues 1 to 32 constitute a chloroplast transit peptide; that stretch reads MSLTGCLPPRPPCSMRRRTSGGGASVSPVVAM. The segment at 1–66 is disordered; sequence MSLTGCLPPR…EVPPQVTHTL (66 aa). Fe cation contacts are provided by glutamate 139, glutamate 178, histidine 181, glutamate 231, glutamate 264, and histidine 267.

It belongs to the fatty acid desaturase type 2 family. As to quaternary structure, homodimer. It depends on Fe(2+) as a cofactor.

It is found in the plastid. The protein localises to the chloroplast. It functions in the pathway lipid metabolism; fatty acid metabolism. In terms of biological role, introduces a cis double bond in the acyl chain of an acyl-[acyl-carrier protein]. The sequence is that of Acyl-[acyl-carrier-protein] desaturase 3, chloroplastic from Oryza sativa subsp. japonica (Rice).